The sequence spans 288 residues: HTH-type transcriptional regulator CzcR (288 aa).

Residues 1-58 (MELRDLQIFQSVADQGSVSSAAKELNYVQSNVTARIKQLENELKTPLFYRHKRGMTLT) enclose the HTH lysR-type domain. The segment at residues 18–37 (VSSAAKELNYVQSNVTARIK) is a DNA-binding region (H-T-H motif).

It belongs to the LysR transcriptional regulatory family.

This chain is HTH-type transcriptional regulator CzcR (czcR), found in Bacillus cereus (strain ATCC 10987 / NRS 248).